Consider the following 356-residue polypeptide: Uroporphyrinogen decarboxylase (356 aa).

Substrate contacts are provided by residues 27 to 31 (RQAGR), D77, Y154, S209, and H327.

Belongs to the uroporphyrinogen decarboxylase family. In terms of assembly, homodimer.

The protein resides in the cytoplasm. The catalysed reaction is uroporphyrinogen III + 4 H(+) = coproporphyrinogen III + 4 CO2. It participates in porphyrin-containing compound metabolism; protoporphyrin-IX biosynthesis; coproporphyrinogen-III from 5-aminolevulinate: step 4/4. In terms of biological role, catalyzes the decarboxylation of four acetate groups of uroporphyrinogen-III to yield coproporphyrinogen-III. This Aromatoleum aromaticum (strain DSM 19018 / LMG 30748 / EbN1) (Azoarcus sp. (strain EbN1)) protein is Uroporphyrinogen decarboxylase.